A 99-amino-acid polypeptide reads, in one-letter code: Aspartyl/glutamyl-tRNA(Asn/Gln) amidotransferase subunit C (99 aa).

This sequence belongs to the GatC family. Heterotrimer of A, B and C subunits.

It catalyses the reaction L-glutamyl-tRNA(Gln) + L-glutamine + ATP + H2O = L-glutaminyl-tRNA(Gln) + L-glutamate + ADP + phosphate + H(+). The catalysed reaction is L-aspartyl-tRNA(Asn) + L-glutamine + ATP + H2O = L-asparaginyl-tRNA(Asn) + L-glutamate + ADP + phosphate + 2 H(+). Its function is as follows. Allows the formation of correctly charged Asn-tRNA(Asn) or Gln-tRNA(Gln) through the transamidation of misacylated Asp-tRNA(Asn) or Glu-tRNA(Gln) in organisms which lack either or both of asparaginyl-tRNA or glutaminyl-tRNA synthetases. The reaction takes place in the presence of glutamine and ATP through an activated phospho-Asp-tRNA(Asn) or phospho-Glu-tRNA(Gln). This Polaromonas sp. (strain JS666 / ATCC BAA-500) protein is Aspartyl/glutamyl-tRNA(Asn/Gln) amidotransferase subunit C.